A 373-amino-acid polypeptide reads, in one-letter code: Flagellar P-ring protein (373 aa).

The N-terminal stretch at 1–28 (MPRVSTHLVKLAAAALCALLLSAVAASA) is a signal peptide.

The protein belongs to the FlgI family. As to quaternary structure, the basal body constitutes a major portion of the flagellar organelle and consists of four rings (L,P,S, and M) mounted on a central rod.

Its subcellular location is the periplasm. The protein localises to the bacterial flagellum basal body. Its function is as follows. Assembles around the rod to form the L-ring and probably protects the motor/basal body from shearing forces during rotation. The polypeptide is Flagellar P-ring protein (Rhodopseudomonas palustris (strain ATCC BAA-98 / CGA009)).